Here is a 402-residue protein sequence, read N- to C-terminus: CCA-adding enzyme (402 aa).

ATP is bound by residues Gly32 and Arg35. CTP-binding residues include Gly32 and Arg35. Mg(2+)-binding residues include Asp45 and Asp47. ATP-binding residues include Arg119, Asp162, Arg165, Arg168, and Arg171. Positions 119, 162, 165, 168, and 171 each coordinate CTP.

The protein belongs to the tRNA nucleotidyltransferase/poly(A) polymerase family. Bacterial CCA-adding enzyme type 3 subfamily. Homodimer. Mg(2+) serves as cofactor.

It carries out the reaction a tRNA precursor + 2 CTP + ATP = a tRNA with a 3' CCA end + 3 diphosphate. The enzyme catalyses a tRNA with a 3' CCA end + 2 CTP + ATP = a tRNA with a 3' CCACCA end + 3 diphosphate. Functionally, catalyzes the addition and repair of the essential 3'-terminal CCA sequence in tRNAs without using a nucleic acid template. Adds these three nucleotides in the order of C, C, and A to the tRNA nucleotide-73, using CTP and ATP as substrates and producing inorganic pyrophosphate. tRNA 3'-terminal CCA addition is required both for tRNA processing and repair. Also involved in tRNA surveillance by mediating tandem CCA addition to generate a CCACCA at the 3' terminus of unstable tRNAs. While stable tRNAs receive only 3'-terminal CCA, unstable tRNAs are marked with CCACCA and rapidly degraded. In Lactococcus lactis subsp. cremoris (strain MG1363), this protein is CCA-adding enzyme.